We begin with the raw amino-acid sequence, 132 residues long: S-protein homolog 19 (132 aa).

The signal sequence occupies residues 1-26 (MSGSLAFHIIMSVTFMVFFFGGLCEA). The N-linked (GlcNAc...) asparagine glycan is linked to Asn-87.

Belongs to the plant self-incompatibility (S1) protein family.

It is found in the secreted. The chain is S-protein homolog 19 from Arabidopsis thaliana (Mouse-ear cress).